The following is a 305-amino-acid chain: UDP-3-O-acyl-N-acetylglucosamine deacetylase (305 aa).

The Zn(2+) site is built by His79, His238, and Asp242. The active-site Proton donor is the His265.

This sequence belongs to the LpxC family. It depends on Zn(2+) as a cofactor.

It catalyses the reaction a UDP-3-O-[(3R)-3-hydroxyacyl]-N-acetyl-alpha-D-glucosamine + H2O = a UDP-3-O-[(3R)-3-hydroxyacyl]-alpha-D-glucosamine + acetate. The protein operates within glycolipid biosynthesis; lipid IV(A) biosynthesis; lipid IV(A) from (3R)-3-hydroxytetradecanoyl-[acyl-carrier-protein] and UDP-N-acetyl-alpha-D-glucosamine: step 2/6. Its function is as follows. Catalyzes the hydrolysis of UDP-3-O-myristoyl-N-acetylglucosamine to form UDP-3-O-myristoylglucosamine and acetate, the committed step in lipid A biosynthesis. The polypeptide is UDP-3-O-acyl-N-acetylglucosamine deacetylase (Salmonella paratyphi A (strain ATCC 9150 / SARB42)).